A 398-amino-acid polypeptide reads, in one-letter code: Ethanolaminephosphotransferase 1 (398 aa).

A2 is subject to N-acetylalanine. 10 helical membrane-spanning segments follow: residues 47-69 (WLAP…LLLT), 84-103 (HVPD…AYTL), 123-145 (LFDH…SIFG), 150-172 (GVSV…LSHW), 179-201 (VLFL…IVTA), 221-243 (LFTA…LNFF), 256-278 (VYEA…VWIL), 291-310 (IFYF…LIVC), 319-341 (TLNW…AATS), and 345-367 (SALL…VQVV). A non-standard amino acid (selenocysteine) is located at residue U388.

It belongs to the CDP-alcohol phosphatidyltransferase class-I family. Requires Mg(2+) as cofactor. The cofactor is Mn(2+).

It is found in the endoplasmic reticulum membrane. The enzyme catalyses CDP-ethanolamine + a 1,2-diacyl-sn-glycerol = a 1,2-diacyl-sn-glycero-3-phosphoethanolamine + CMP + H(+). It catalyses the reaction 1-O-alkyl-2-acyl-sn-glycerol + CDP-ethanolamine = a 1-O-alkyl-2-acyl-sn-glycero-3-phosphoethanolamine + CMP + H(+). It functions in the pathway phospholipid metabolism; phosphatidylethanolamine biosynthesis; phosphatidylethanolamine from ethanolamine: step 3/3. In terms of biological role, ethanolaminephosphotransferase that catalyzes the transfer of phosphoethanolamine (PE) from CDP-ethanolamine to lipid acceptors, the final step in the synthesis of PE via the 'Kennedy' pathway. PE is the second most abundant phospholipid of membranes in mammals and is involved in various membrane-related cellular processes. The enzyme is critical for the synthesis of several PE species and also catalyzes the synthesis of plasmanyl-PE, a lipid required for proper myelination and neurodevelopment, from 1-alkyl-2-acylglycerol. The protein is Ethanolaminephosphotransferase 1 of Mus musculus (Mouse).